A 270-amino-acid polypeptide reads, in one-letter code: MLNLCDEDFDAMELVEGALALNKAINPETQLEWAHIELARLLKEAELALVHERDEKARFEAFLRLFYQEWGFSGDREAYFDSRNAFIDQVLQRRKGIPVSLGSLLLYLGHKLGFPLNGISFPTQFLLSLNWSGERPIYLNPFNGEIVSQHTLQAWLVGHKGPLAKLKPQHLQSVDNPTIIGRWLALLKSALLREERYTLALRCTDLALTFVPDDPYEIRDRGFIYQQLQCHQIAISDYQYFIEHCPNDPAAELLKTQVNALSHDSQVTLH.

The protein belongs to the UPF0162 family.

The sequence is that of UPF0162 protein VC_2176 from Vibrio cholerae serotype O1 (strain ATCC 39315 / El Tor Inaba N16961).